Here is a 231-residue protein sequence, read N- to C-terminus: Putative carboxymethylenebutenolidase (231 aa).

Catalysis depends on residues aspartate 169 and histidine 200.

It belongs to the dienelactone hydrolase family.

The enzyme catalyses 2-(5-oxo-2,5-dihydrofuran-2-ylidene)acetate + H2O = 4-oxohex-2-enedioate + H(+). In Azospirillum brasilense, this protein is Putative carboxymethylenebutenolidase.